The sequence spans 390 residues: Serpin B3 (390 aa).

Position 1 is an N-acetylmethionine (Met-1).

This sequence belongs to the serpin family. Ov-serpin subfamily. In terms of assembly, interacts with MAPK8/JNK1. Squamous cells. Expressed in some hepatocellular carcinoma (at protein level).

The protein localises to the cytoplasm. Its function is as follows. May act as a papain-like cysteine protease inhibitor to modulate the host immune response against tumor cells. Also functions as an inhibitor of UV-induced apoptosis via suppression of the activity of c-Jun NH(2)-terminal kinase (JNK1). The polypeptide is Serpin B3 (SERPINB3) (Homo sapiens (Human)).